Reading from the N-terminus, the 89-residue chain is Small ribosomal subunit protein uS15 (89 aa).

The protein belongs to the universal ribosomal protein uS15 family. Part of the 30S ribosomal subunit. Forms a bridge to the 50S subunit in the 70S ribosome, contacting the 23S rRNA.

Its function is as follows. One of the primary rRNA binding proteins, it binds directly to 16S rRNA where it helps nucleate assembly of the platform of the 30S subunit by binding and bridging several RNA helices of the 16S rRNA. In terms of biological role, forms an intersubunit bridge (bridge B4) with the 23S rRNA of the 50S subunit in the ribosome. This chain is Small ribosomal subunit protein uS15, found in Jannaschia sp. (strain CCS1).